The primary structure comprises 263 residues: MTVSPSSQTGRGEIGRDELVRWLGEYLRIGAYPDPSLNGLQIQGTDKIRRIAASVDTSLQTLQAAAESGADLLLVHHGLFWGRPLAITGPHYERVRTAIQADLNLYAAHIPLDAHPEVGNNAMIARALSLTDLQPFGDWQGHKIGVAGTLPRELGLQDFADRIQKLTGEICLVHGGGSPNIHRVGVTSGSGAGAIAEAAAMGLDTLLTGEPEHKYFHDSFEYGVNVIFAGHYETEVFGVRALAARIEDEFGIPWQFLNFPTGL.

The a divalent metal cation site is built by His76, His77, Asp113, His231, and Glu235.

Belongs to the GTP cyclohydrolase I type 2/NIF3 family. As to quaternary structure, homohexamer.

This Deinococcus radiodurans (strain ATCC 13939 / DSM 20539 / JCM 16871 / CCUG 27074 / LMG 4051 / NBRC 15346 / NCIMB 9279 / VKM B-1422 / R1) protein is GTP cyclohydrolase 1 type 2 homolog.